A 535-amino-acid chain; its full sequence is Keratin, type II cytoskeletal 79 (535 aa).

Composition is skewed to polar residues over residues 1–12 and 28–38; these read MRSSVSRQTYST and QARTSFSSVTV. A disordered region spans residues 1–53; sequence MRSSVSRQTYSTKGAFSSSSASGGGGSQARTSFSSVTVSRNSGRGGGPRCGPS. Residues 1–141 are head; it reads MRSSVSRQTY…DPEIQRVRTE (141 aa). Positions 43 to 53 are enriched in gly residues; sequence GRGGGPRCGPS. The segment at 142–177 is coil 1A; that stretch reads EREQIKTLNNKFASFIDKVRFLEQQNKVLETKWALL. The region spanning 142-457 is the IF rod domain; sequence EREQIKTLNN…KLLESEESRM (316 aa). Residues 178 to 198 are linker 1; that stretch reads QEQGQKSGVTRNNLEPLFEHF. Positions 199-290 are coil 1B; it reads INNLRGKLDN…HLYEEELSQV (92 aa). The segment at 291 to 314 is linker 12; it reads QTHVSDTSVILSMDNNRNLDLDSI. Residues 315-453 form a coil 2 region; the sequence is IAEVKAQYEQ…ATYRKLLESE (139 aa). Positions 454-535 are tail; the sequence is ESRMSGECPS…TTVKTSSRRY (82 aa).

The protein belongs to the intermediate filament family. As to quaternary structure, heterotetramer of two type I and two type II keratins.

In Bos taurus (Bovine), this protein is Keratin, type II cytoskeletal 79 (KRT79).